Reading from the N-terminus, the 920-residue chain is Ubiquitin ligase-binding protein BUL2 (920 aa).

Positions M1–R10 are enriched in polar residues. The segment at M1–T89 is disordered. T22 bears the Phosphothreonine mark. The segment covering Q35–S57 has biased composition (polar residues). Residues D73 to N82 are compositionally biased toward basic and acidic residues. The PY-motif signature appears at F129 to Y133. Residue S557 is modified to Phosphoserine.

The protein belongs to the BUL1 family. As to quaternary structure, component of the RSP5-BUL1/2 ubiquitin ligase complex composed of at least RSP5 and BUL1 or BUL2.

The protein localises to the cytoplasm. Its pathway is protein modification; protein ubiquitination. Functionally, component of a RSP5 ubiquitin ligase complex which specifies polyubiquitination and intracellular trafficking of the general amino acid permease GAP1 as well as other permeases such as PMA1. The RSP5-BUL1/2 complex is also necessary for the heat-shock element (HSE)-mediated gene expression, nitrogen starvation GLN3-dependent transcription and pressure-induced differential regulation of the 2 tryptophan permeases TAT1 and TAT2. The chain is Ubiquitin ligase-binding protein BUL2 (BUL2) from Saccharomyces cerevisiae (strain ATCC 204508 / S288c) (Baker's yeast).